Here is a 469-residue protein sequence, read N- to C-terminus: MNPNQKIITIGSVSLTIATICFLMQIAILVTTVTLHFKQYECDSPANNQVMPCEPIIIERNITEIVYLTNTTIEKEICPKLVEYRNWSKPQCKITGFAPFSKDNSIRLSAGGDIWVTREPYVSCDPGKCYQFALGQGTTLDNKHSNDTIHDRTPHRTLLMNELGVPFHLGTRQVCIAWSSSSCHDGKAWLHVCVTGYDKNATASFIYDGRLVDSIGSWSQNILRTQESECVCINGTCTVVMTDGSASGRADTKILFIEEGKIVHISPLSGSAQHVEECSCYPRYPGVRCICRDNWKGSNRPVVDINVKDYSIDSSYVCSGLVGDTPRNNDRSSNSYCRNPNNEKGNHGVKGWAFDDGNDVWMGRTISEDSRSGYETFKVIGGWSTPNSKLQINRQVIVDSDNRSGYSGIFSVEGKSCINRCFYVELIRGREQETRVWWTSNSIVVFCGTSGTYGTGSWPDGADINLMPI.

The Intravirion segment spans residues 1–9 (MNPNQKIIT). A helical transmembrane segment spans residues 10 to 30 (IGSVSLTIATICFLMQIAILV). The tract at residues 11-33 (GSVSLTIATICFLMQIAILVTTV) is involved in apical transport and lipid raft association. The Virion surface segment spans residues 31 to 469 (TTVTLHFKQY…DGADINLMPI (439 aa)). The tract at residues 36–88 (HFKQYECDSPANNQVMPCEPIIIERNITEIVYLTNTTIEKEICPKLVEYRNWS) is hypervariable stalk region. 3 N-linked (GlcNAc...) asparagine; by host glycosylation sites follow: N61, N70, and N86. Positions 91–469 (QCKITGFAPF…DGADINLMPI (379 aa)) are head of neuraminidase. Disulfide bonds link C92/C417, C124/C129, C183/C230, C232/C237, C278/C291, C280/C289, C318/C337, and C421/C447. Position 118 (R118) interacts with substrate. N146 carries an N-linked (GlcNAc...) asparagine; by host glycan. D151 acts as the Proton donor/acceptor in catalysis. Substrate is bound at residue R152. Residues N200 and N234 are each glycosylated (N-linked (GlcNAc...) asparagine; by host). Residue 276-277 (EE) coordinates substrate. R292 is a binding site for substrate. 3 residues coordinate Ca(2+): D293, G297, and D324. R371 is a substrate binding site. N-linked (GlcNAc...) asparagine; by host glycosylation occurs at N402. Catalysis depends on Y406, which acts as the Nucleophile.

It belongs to the glycosyl hydrolase 34 family. In terms of assembly, homotetramer. Ca(2+) is required as a cofactor. Post-translationally, N-glycosylated.

It localises to the virion membrane. Its subcellular location is the host apical cell membrane. The catalysed reaction is Hydrolysis of alpha-(2-&gt;3)-, alpha-(2-&gt;6)-, alpha-(2-&gt;8)- glycosidic linkages of terminal sialic acid residues in oligosaccharides, glycoproteins, glycolipids, colominic acid and synthetic substrates.. Its activity is regulated as follows. Inhibited by the neuraminidase inhibitors zanamivir (Relenza) and oseltamivir (Tamiflu). These drugs interfere with the release of progeny virus from infected cells and are effective against all influenza strains. Resistance to neuraminidase inhibitors is quite rare. Its function is as follows. Catalyzes the removal of terminal sialic acid residues from viral and cellular glycoconjugates. Cleaves off the terminal sialic acids on the glycosylated HA during virus budding to facilitate virus release. Additionally helps virus spread through the circulation by further removing sialic acids from the cell surface. These cleavages prevent self-aggregation and ensure the efficient spread of the progeny virus from cell to cell. Otherwise, infection would be limited to one round of replication. Described as a receptor-destroying enzyme because it cleaves a terminal sialic acid from the cellular receptors. May facilitate viral invasion of the upper airways by cleaving the sialic acid moieties on the mucin of the airway epithelial cells. Likely to plays a role in the budding process through its association with lipid rafts during intracellular transport. May additionally display a raft-association independent effect on budding. Plays a role in the determination of host range restriction on replication and virulence. Sialidase activity in late endosome/lysosome traffic seems to enhance virus replication. This chain is Neuraminidase, found in Influenza A virus (strain A/Udorn/307/1972 H3N2).